The chain runs to 150 residues: Truncated transcription factor CAULIFLOWER A (150 aa).

The MADS-box domain maps to 1 to 61; that stretch reads MGRGRVEMKR…GKLFEYSSES (61 aa). A K-box; partial domain is found at 90-150; it reads QTNWSMEYSR…IRSRKNQLMH (61 aa).

As to quaternary structure, homodimer capable of binding to CArG-box sequences. In terms of tissue distribution, expressed in some of the meristems of arrest-stage cauliflower heads.

The protein resides in the nucleus. Functionally, probable transcription factor that promotes early floral meristem identity in synergy with APETALA1, FRUITFULL and LEAFY. Is required subsequently for the transition of an inflorescence meristem into a floral meristem. Seems to be partially redundant to the function of APETALA1. The protein is Truncated transcription factor CAULIFLOWER A (CAL-A) of Brassica oleracea var. botrytis (Cauliflower).